Here is a 781-residue protein sequence, read N- to C-terminus: Toll-like receptor 2 type-2 (781 aa).

The first 24 residues, 1–24 (MHTWKMWAICTALAAHLPEEQALR), serve as a signal peptide directing secretion. Residues 25–585 (QACLSCDATQ…QLSLMECHRS (561 aa)) are Extracellular-facing. A disulfide bond links Cys-30 and Cys-36. The N-linked (GlcNAc...) asparagine glycan is linked to Asn-37. 6 LRR repeats span residues 53–74 (KITV…DLQK), 77–98 (NLRT…SFGS), 101–122 (KLEL…WFGP), 125–146 (SLQH…SPFS), 150–171 (NLSS…NFEG), and 174–195 (FLNT…SLKS). Asn-109 carries N-linked (GlcNAc...) asparagine glycosylation. Residues Asn-150, Asn-184, Asn-301, and Asn-313 are each glycosylated (N-linked (GlcNAc...) asparagine). Cys-350 and Cys-379 are oxidised to a cystine. 7 LRR repeats span residues 358 to 378 (SLEY…EHSA), 385 to 406 (SLQT…GKSL), 411 to 432 (NLNL…CEWP), 434 to 455 (NLKY…IPST), 456 to 474 (LEVL…LQLP), 475 to 496 (FLKE…TDIP), and 497 to 518 (NLVA…EFES). N-linked (GlcNAc...) asparagine glycosylation is present at Asn-390. An intrachain disulfide couples Cys-429 to Cys-451. N-linked (GlcNAc...) asparagine glycosylation occurs at Asn-439. The 55-residue stretch at 530–584 (NNFICSCEFLSFIHHEAGIAQVLVGWPESYICDSPLTVRGAQVGSVQLSLMECHR) folds into the LRRCT domain. A helical transmembrane segment spans residues 586–606 (LLVSLICTLVFLFILILVVVG). Residues 607–781 (YKYHAVWYMR…WENLKAALKS (175 aa)) are Cytoplasmic-facing. Residues 636-779 (ICYDAFVSYS…MFWENLKAAL (144 aa)) enclose the TIR domain.

Belongs to the Toll-like receptor family. In terms of assembly, binds MYD88 (via TIR domain). In terms of processing, N-glycosylated. As to expression, highly expressed in ovary. Also detected in brain, heart, lung, liver, spleen and kidney, and at low levels in gizzard, muscle, testis and proventriculus.

It localises to the membrane. Its function is as follows. Participates in the innate immune response to microbial agents. Acts via MYD88 and TRAF6, leading to NF-kappa-B activation, cytokine secretion and the inflammatory response. Mediates the response to mycoplasmal macrophage-activating lipopeptide-2kD (MALP-2). The protein is Toll-like receptor 2 type-2 (TLR2-2) of Gallus gallus (Chicken).